Consider the following 204-residue polypeptide: MEKRAMRMLAMFVLGTSFWSCAGFPVYDYDPSSLREAVGASVAKVNSQSLSPYLFRAFRSSLKRVNVLGEDSLSMDIEFGIRETTCKRDSGEDPATCDFQRGYFTPSAICRSTVQISAEKVQDVWVRCRWSSSSESNSSEEMIFGDILGSSTSRNNYLRGLIPDVSRTEPLYERSLETMRRFPPPGNRSFPNQWPRARTNTGFE.

An N-terminal signal peptide occupies residues 1–23; sequence MEKRAMRMLAMFVLGTSFWSCAG. 2 disulfides stabilise this stretch: C86–C97 and C110–C128. Position 90 is a phosphoserine (S90). A phosphoserine mark is found at S138, S139, S166, and S175. The interval 179 to 204 is disordered; it reads MRRFPPPGNRSFPNQWPRARTNTGFE.

It belongs to the SPP2 family. Multiply phosphorylated at serine residues. In terms of processing, phosphorylation sites are present in the extracellular medium.

It is found in the secreted. In terms of biological role, could coordinate an aspect of bone turnover. The chain is Secreted phosphoprotein 24 (SPP2) from Sus scrofa (Pig).